Consider the following 111-residue polypeptide: Universal stress protein B (111 aa).

Transmembrane regions (helical) follow at residues 1–21 (MIST…NMAR) and 90–110 (FILT…LILW).

Belongs to the universal stress protein B family.

Its subcellular location is the cell inner membrane. This Yersinia enterocolitica serotype O:8 / biotype 1B (strain NCTC 13174 / 8081) protein is Universal stress protein B.